A 164-amino-acid polypeptide reads, in one-letter code: Large ribosomal subunit protein uL23 (164 aa).

Residues 1–41 (MPAKAASAAASKKNSAPKSAVSKKVAKKGAPAAAAKPTKVV) form a disordered region.

It belongs to the universal ribosomal protein uL23 family.

Functionally, this protein binds to a specific region on the 26S rRNA. The sequence is that of Large ribosomal subunit protein uL23 (RPL23A) from Trypanosoma brucei brucei.